We begin with the raw amino-acid sequence, 339 residues long: MSQEPEPGAMPYSPADDPSPLDLSLGSTSRRKKRKSHDIPNSPSKHPFPDGLSEEEKQKLERRRKRNRDAARRRRRKQTDYVDKLHEACEELQRANEHLRKEIRDLRTECTSLRVQLACHEPVCPMAVPLTVTLGLLTTPHDPVPEPPICTPPPPSPDEPNAPHCSGSQPPICTPPPPDTEELCAQLCSTPPPPISTPHIIYAPGPSPLQPPICTPAPPDAEELCAQLCSTPPPPICTPHSLFCPPQPPSPEGIFPALCPVTEPCTPPSPGTVYAQLCPVGQVPLFTPSPPHPAPEPERLYARLTEDPEQDSLYSGQIYTQFPSDTQSTVWWFPGDGRP.

A disordered region spans residues 1-80 (MSQEPEPGAM…ARRRRRKQTD (80 aa)). Ser-42 carries the post-translational modification Phosphoserine; by host CDK2. A basic motif region spans residues 57-84 (KQKLERRRKRNRDAARRRRRKQTDYVDK). Residues 57-120 (KQKLERRRKR…TSLRVQLACH (64 aa)) form the bZIP domain. A compositionally biased stretch (basic residues) spans 60–77 (LERRRKRNRDAARRRRRK). The short motif at 62 to 78 (RRRKRNRDAARRRRRKQ) is the Nuclear localization signal element. Residues 85 to 113 (LHEACEELQRANEHLRKEIRDLRTECTSL) are leucine-zipper. The interval 120–339 (HEPVCPMAVP…VWWFPGDGRP (220 aa)) is transactivation domain. Pro residues predominate over residues 145-160 (PEPPICTPPPPSPDEP). The interval 145–172 (PEPPICTPPPPSPDEPNAPHCSGSQPPI) is disordered.

It belongs to the bZIP family. Jun subfamily. In terms of assembly, homodimer. Interacts with host JUN; this interaction allows MEQ to engage in host cell processes by disguising itself as a cellular JUN. Post-translationally, phosphorylated by host CDK2; this phosphorylation greatly reduces the DNA binding activity of MEQ.

Its subcellular location is the host nucleus. The protein resides in the host nucleolus. In terms of biological role, functions as a DNA-binding transcription factor. Promotes transformation, host cell growth, host cell-cycle progression through G1/S phase, and possesses antiapoptotic activity. Forms functional heterodimers with host JUN. These heterodimers bind with high affinity DNA sequences called MEQ-responsive elements MERE I (TGACA/GTCA), while MEQ homodimers bind a second type of sites termed MERE II (ACACA). Both homo and heterodimerization of MEQ are required for oncogenesis. The sequence is that of Oncoprotein MEQ (MDV005) from Gallid herpesvirus 2 (strain Chicken/Md5/ATCC VR-987) (GaHV-2).